Consider the following 1017-residue polypeptide: Type VI secretion system spike protein VgrG3 (1017 aa).

Asp842 is an active-site residue.

The protein belongs to the VgrG protein family. Interacts with TsiV3. Interacts with TseL.

The protein resides in the secreted. Part of the type VI secretion system specialized secretion system, which delivers several virulence factors in both prokaryotic and eukaryotic cells during infection. Forms the spike at the tip of the elongating tube formed by haemolysin co-regulated protein Hcp. Allows the delivery of the TseL antibacterial toxin to target cells where it exerts its toxicity. Additionally, acts directly as an effector and targets the cell wall peptidoglycan layer of prey cells for degradation via its C-terminus. Toxicity is counteracted by a cognate immunity protein TsiV3. This is Type VI secretion system spike protein VgrG3 from Vibrio cholerae serotype O1 (strain ATCC 39315 / El Tor Inaba N16961).